We begin with the raw amino-acid sequence, 332 residues long: MKLAIDAMGGDYAPEEIIKGSLKALDHFKDIEIFLIGKEEALKGLEGKSERLKLIYASEVIENNEAPVAAIKKKKNSSMVVGLELLKKGEVEAFLSAGNTGALMAGSLLILGRIKGIKRPALAPILPTLNGATVLLDAGSNTDCDEENLFQFAVMGHVYAQKMFGIEKPRIGLFNVGTEEEKGNEVVKKAFERLKNSRLNFIGNVEGRDIPYGVCEVVVCDGFVGNAILKSMEGIAFVISQLLKEELSRNIFTKMGALLIMGGLKRITQKMDYTEYGGAPLLGISKPVIKAHGNSKAKAIFNAIKQAKNLVGNDVLRHIKEEIELTGDEISV.

It belongs to the PlsX family. Homodimer. Probably interacts with PlsY.

It localises to the cytoplasm. The catalysed reaction is a fatty acyl-[ACP] + phosphate = an acyl phosphate + holo-[ACP]. Its pathway is lipid metabolism; phospholipid metabolism. Functionally, catalyzes the reversible formation of acyl-phosphate (acyl-PO(4)) from acyl-[acyl-carrier-protein] (acyl-ACP). This enzyme utilizes acyl-ACP as fatty acyl donor, but not acyl-CoA. The chain is Phosphate acyltransferase from Caldanaerobacter subterraneus subsp. tengcongensis (strain DSM 15242 / JCM 11007 / NBRC 100824 / MB4) (Thermoanaerobacter tengcongensis).